The primary structure comprises 75 residues: uncharacterized protein (75 aa).

This is an uncharacterized protein from Methanocaldococcus jannaschii (strain ATCC 43067 / DSM 2661 / JAL-1 / JCM 10045 / NBRC 100440) (Methanococcus jannaschii).